We begin with the raw amino-acid sequence, 445 residues long: Tubby-like F-box protein 8 (445 aa).

The F-box domain maps to Glu56–Lys102.

Belongs to the TUB family. As to expression, ubiquitous.

The protein is Tubby-like F-box protein 8 (TULP8) of Oryza sativa subsp. japonica (Rice).